The following is a 493-amino-acid chain: 6-aminohexanoate-cyclic-dimer hydrolase (493 aa).

Residues Lys-72 and Ser-150 each act as charge relay system in the active site. Ser-174 (acyl-ester intermediate) is an active-site residue.

It belongs to the amidase family. Homodimer.

It catalyses the reaction 1,8-diazacyclotetradecane-2,9-dione + H2O = N-(6-aminohexanoyl)-6-aminohexanoate. The protein operates within xenobiotic degradation; nylon-6 oligomer degradation. Catalyzes the hydrolysis of 6-aminohexanoic acid cyclic dimer (1,8-diazacyclotetradecane-2,9-dione) to form the linear dimer 6-aminohexanoyl-6-aminohexanoic acid. In Pseudomonas sp. (strain NK87), this protein is 6-aminohexanoate-cyclic-dimer hydrolase (nylA).